The following is a 279-amino-acid chain: Undecaprenyl-diphosphatase (279 aa).

8 helical membrane passes run 1 to 21 (MVLE…LPIS), 39 to 59 (GRFF…LYFF), 96 to 116 (LLLV…VRFV), 128 to 148 (FTMG…DALF), 155 to 175 (IFQI…FAII), 201 to 221 (FSFL…LVAG), 231 to 251 (YSLI…SALL), and 259 to 279 (FVLF…VSFF).

Belongs to the UppP family.

The protein localises to the cell membrane. The catalysed reaction is di-trans,octa-cis-undecaprenyl diphosphate + H2O = di-trans,octa-cis-undecaprenyl phosphate + phosphate + H(+). In terms of biological role, catalyzes the dephosphorylation of undecaprenyl diphosphate (UPP). Confers resistance to bacitracin. This is Undecaprenyl-diphosphatase from Tropheryma whipplei (strain TW08/27) (Whipple's bacillus).